A 248-amino-acid chain; its full sequence is Pyridoxine 5'-phosphate synthase (248 aa).

Asparagine 12 provides a ligand contact to 3-amino-2-oxopropyl phosphate. 14-15 (DH) contributes to the 1-deoxy-D-xylulose 5-phosphate binding site. Residue arginine 23 participates in 3-amino-2-oxopropyl phosphate binding. Residue histidine 48 is the Proton acceptor of the active site. Residues arginine 50 and histidine 55 each contribute to the 1-deoxy-D-xylulose 5-phosphate site. Glutamate 75 functions as the Proton acceptor in the catalytic mechanism. Threonine 105 lines the 1-deoxy-D-xylulose 5-phosphate pocket. The Proton donor role is filled by histidine 196. Residues glycine 197 and 218 to 219 (GH) contribute to the 3-amino-2-oxopropyl phosphate site.

This sequence belongs to the PNP synthase family. As to quaternary structure, homooctamer; tetramer of dimers.

The protein resides in the cytoplasm. It catalyses the reaction 3-amino-2-oxopropyl phosphate + 1-deoxy-D-xylulose 5-phosphate = pyridoxine 5'-phosphate + phosphate + 2 H2O + H(+). The protein operates within cofactor biosynthesis; pyridoxine 5'-phosphate biosynthesis; pyridoxine 5'-phosphate from D-erythrose 4-phosphate: step 5/5. Its function is as follows. Catalyzes the complicated ring closure reaction between the two acyclic compounds 1-deoxy-D-xylulose-5-phosphate (DXP) and 3-amino-2-oxopropyl phosphate (1-amino-acetone-3-phosphate or AAP) to form pyridoxine 5'-phosphate (PNP) and inorganic phosphate. This Stutzerimonas stutzeri (strain A1501) (Pseudomonas stutzeri) protein is Pyridoxine 5'-phosphate synthase.